The chain runs to 202 residues: Holliday junction branch migration complex subunit RuvA (202 aa).

The interval 1–64 (MISRLRGTVL…EDAFDLFGFL (64 aa)) is domain I. A domain II region spans residues 65–143 (TKGEEEVFLL…TIHLEAVSRG (79 aa)). Residues 143-147 (GTAPA) are flexible linker. The tract at residues 148–202 (AVSGAHADLVSALLNLGYKQPQAEKAADLASERLGAEATFQALFREALKALRSGG) is domain III.

It belongs to the RuvA family. Homotetramer. Forms an RuvA(8)-RuvB(12)-Holliday junction (HJ) complex. HJ DNA is sandwiched between 2 RuvA tetramers; dsDNA enters through RuvA and exits via RuvB. An RuvB hexamer assembles on each DNA strand where it exits the tetramer. Each RuvB hexamer is contacted by two RuvA subunits (via domain III) on 2 adjacent RuvB subunits; this complex drives branch migration. In the full resolvosome a probable DNA-RuvA(4)-RuvB(12)-RuvC(2) complex forms which resolves the HJ.

It localises to the cytoplasm. In terms of biological role, the RuvA-RuvB-RuvC complex processes Holliday junction (HJ) DNA during genetic recombination and DNA repair, while the RuvA-RuvB complex plays an important role in the rescue of blocked DNA replication forks via replication fork reversal (RFR). RuvA specifically binds to HJ cruciform DNA, conferring on it an open structure. The RuvB hexamer acts as an ATP-dependent pump, pulling dsDNA into and through the RuvAB complex. HJ branch migration allows RuvC to scan DNA until it finds its consensus sequence, where it cleaves and resolves the cruciform DNA. In Myxococcus xanthus (strain DK1622), this protein is Holliday junction branch migration complex subunit RuvA.